Consider the following 198-residue polypeptide: Na(+)-translocating NADH-quinone reductase subunit E (198 aa).

A run of 6 helical transmembrane segments spans residues 11–31, 35–55, 77–97, 110–130, 140–160, and 176–196; these read SVFI…FLAV, VSTA…SVPV, FLNF…LEMI, GIFL…SFMV, VVYG…LAGI, and LGIT…FSGV.

It belongs to the NqrDE/RnfAE family. As to quaternary structure, composed of six subunits; NqrA, NqrB, NqrC, NqrD, NqrE and NqrF.

The protein resides in the cell inner membrane. The enzyme catalyses a ubiquinone + n Na(+)(in) + NADH + H(+) = a ubiquinol + n Na(+)(out) + NAD(+). In terms of biological role, NQR complex catalyzes the reduction of ubiquinone-1 to ubiquinol by two successive reactions, coupled with the transport of Na(+) ions from the cytoplasm to the periplasm. NqrA to NqrE are probably involved in the second step, the conversion of ubisemiquinone to ubiquinol. This is Na(+)-translocating NADH-quinone reductase subunit E from Histophilus somni (strain 129Pt) (Haemophilus somnus).